Consider the following 239-residue polypeptide: Ureidoacrylate amidohydrolase RutB (239 aa).

Catalysis depends on D35, which acts as the Proton acceptor. K144 is an active-site residue. C177 serves as the catalytic Nucleophile.

This sequence belongs to the isochorismatase family. RutB subfamily.

The catalysed reaction is (Z)-3-ureidoacrylate + H2O + H(+) = (Z)-3-aminoacrylate + NH4(+) + CO2. The enzyme catalyses (Z)-3-ureidoacrylate + H2O = (Z)-3-aminoacrylate + carbamate + H(+). It catalyses the reaction (Z)-2-methylureidoacrylate + H2O + H(+) = (Z)-2-methylaminoacrylate + NH4(+) + CO2. Its function is as follows. Hydrolyzes ureidoacrylate to form aminoacrylate and carbamate. The carbamate hydrolyzes spontaneously, thereby releasing one of the nitrogen atoms of the pyrimidine ring as ammonia and one of its carbon atoms as CO2. This is Ureidoacrylate amidohydrolase RutB from Caulobacter segnis (strain ATCC 21756 / DSM 7131 / JCM 7823 / NBRC 15250 / LMG 17158 / TK0059) (Mycoplana segnis).